Consider the following 819-residue polypeptide: THO complex subunit 5B (819 aa).

The disordered stretch occupies residues 285–332 (ARQQSRKDSGMSSNTESSRLEDDGPDDDDDGQRRRKRPKKLTSKEGSD).

This sequence belongs to the THOC5 family. As to quaternary structure, component of the THO complex, which is composed of THO1, THO2, THO3, THO5, THO6 and THO7.

It localises to the nucleus. In terms of biological role, acts as a component of the THO subcomplex of the TREX complex which is thought to couple mRNA transcription, processing and nuclear export. The sequence is that of THO complex subunit 5B (THO5B) from Arabidopsis thaliana (Mouse-ear cress).